A 1733-amino-acid polypeptide reads, in one-letter code: Protein NETWORKED 1D (1733 aa).

The 81-residue stretch at 12–92 (YSWWWDSHIS…ERYDHATGVI (81 aa)) folds into the NAB domain. Coiled-coil stretches lie at residues 195 to 816 (KEIN…RESS), 897 to 931 (LIAENQDIKEASKLLEKLVSELEEENIGKQVQIDS), 960 to 1043 (DENS…QKLI), and 1196 to 1386 (ARSA…NDLM). A disordered region spans residues 1456–1476 (LKTSSARRSRRRNGSLRKQNH). Residues 1460-1470 (SARRSRRRNGS) are compositionally biased toward basic residues. Coiled-coil stretches lie at residues 1553 to 1627 (ANKR…KVQN) and 1653 to 1686 (SEQARRGSEKIGRLQLEIQRLQFLLLKLEGDRED). Residues 1628 to 1656 (GFERSDGSKSSMDLDENESSRRRRISEQA) form a disordered region.

This sequence belongs to the NET family.

Its function is as follows. Plant-specific actin binding protein. May be part of a membrane-cytoskeletal adapter complex. This chain is Protein NETWORKED 1D, found in Arabidopsis thaliana (Mouse-ear cress).